The sequence spans 285 residues: Tryptophan synthase alpha chain (285 aa).

Active-site proton acceptor residues include E53 and D64.

This sequence belongs to the TrpA family. As to quaternary structure, tetramer of two alpha and two beta chains.

The catalysed reaction is (1S,2R)-1-C-(indol-3-yl)glycerol 3-phosphate + L-serine = D-glyceraldehyde 3-phosphate + L-tryptophan + H2O. It participates in amino-acid biosynthesis; L-tryptophan biosynthesis; L-tryptophan from chorismate: step 5/5. Its function is as follows. The alpha subunit is responsible for the aldol cleavage of indoleglycerol phosphate to indole and glyceraldehyde 3-phosphate. This Bordetella bronchiseptica (strain ATCC BAA-588 / NCTC 13252 / RB50) (Alcaligenes bronchisepticus) protein is Tryptophan synthase alpha chain.